Consider the following 1025-residue polypeptide: MSCLIPENLRNPKKVHENRLPTRAYYYDQDIFESLNGPWAFALFDAPLDAPDAKNLDWETAKKWSTISVPSHWELQEDWKYGKPIYTNVQYPIPIDIPNPPTVNPTGVYARTFELDSKSIESFEHRLRFEGVDNCYELYVNGQYVGFNKGSRNGAEFDIQKYVSEGENLVVVKVFKWSDSTYIEDQDQWWLSGIYRDVSLLKLPKKAHIEDVRVTTTFVDSQYQDAELSVKVDVQGSSYDHINFTLYEPEDGSKVYDASSLLNEENGNTTFSTKEFISFSTKKNEETAFKINVKAPEHWTAENPTLYKYQLDLIGSDGSVIQSIKHHVGFRQVELKDGNITVNGKDILFRGVNRHDHHPRFGRAVPLDFVVRDLILMKKFNINAVRNSHYPNHPKVYDLFDKLGFWVIDEADLETHGVQEPFNRHTNLEAEYPDTKNKLYDVNAHYLSDNPEYEVAYLDRASQLVLRDVNHPSIIIWSLGNEACYGRNHKAMYKLIKQLDPTRLVHYEGDLNALSADIFSFMYPTFEIMERWRKNHTDENGKFEKPLILCEYGHAMGNGPGSLKEYQELFYKEKFYQGGFIWEWANHGIEFEDVSTADGKLHKAYAYGGDFKEEVHDGVFIMDGLCNSEHNPTPGLVEYKKVIEPVHIKIAHGSVTITNKHDFITTDHLLFIDKDTGKTIDVPSLKPEESVTIPSDTTYVVAVLKDDAGVLKAGHEIAWGQAELPLKVPDFVTETAEKAAKINDGKRYVSVESSGLHFILDKLLGKIESLKVKGKEISSKFEGSSITFWRPPTNNDEPRDFKNWKKYNIDLMKQNIHGVSVEKGSNGSLAVVTVNSRISPVVFYYGFETVQKYTIFANKINLNTSMKLTGEYQPPDFPRVGYEFWLGDSYESFEWLGRGPGESYPDKKESQRFGLYDSKDVEEFVYDYPQENGNHTDTHFLNIKFEGAGKLSIFQKEKPFNFKISDEYGVDEAAHACDVKRYGRHYLRLDHAIHGVGSEACGPAVLDQYRLKAQDFNFEFDLAFE.

The Proton donor role is filled by Glu482. Glu551 serves as the catalytic Nucleophile.

Belongs to the glycosyl hydrolase 2 family.

The catalysed reaction is Hydrolysis of terminal non-reducing beta-D-galactose residues in beta-D-galactosides.. The chain is Beta-galactosidase (LAC4) from Kluyveromyces lactis (strain ATCC 8585 / CBS 2359 / DSM 70799 / NBRC 1267 / NRRL Y-1140 / WM37) (Yeast).